The primary structure comprises 377 residues: UPF0754 membrane protein GK0639 (377 aa).

2 consecutive transmembrane segments (helical) span residues 7-27 (LLFM…IAIV) and 357-377 (YLGA…GLWL).

It belongs to the UPF0754 family.

It localises to the cell membrane. This chain is UPF0754 membrane protein GK0639, found in Geobacillus kaustophilus (strain HTA426).